The sequence spans 223 residues: Phosphoribosylformylglycinamidine synthase subunit PurQ (223 aa).

A Glutamine amidotransferase type-1 domain is found at 2–223 (KFAVIQFPGS…ASVLKNFVGK (222 aa)). The active-site Nucleophile is the Cys-86. Catalysis depends on residues His-195 and Glu-197.

Part of the FGAM synthase complex composed of 1 PurL, 1 PurQ and 2 PurS subunits.

It localises to the cytoplasm. It carries out the reaction N(2)-formyl-N(1)-(5-phospho-beta-D-ribosyl)glycinamide + L-glutamine + ATP + H2O = 2-formamido-N(1)-(5-O-phospho-beta-D-ribosyl)acetamidine + L-glutamate + ADP + phosphate + H(+). The enzyme catalyses L-glutamine + H2O = L-glutamate + NH4(+). The protein operates within purine metabolism; IMP biosynthesis via de novo pathway; 5-amino-1-(5-phospho-D-ribosyl)imidazole from N(2)-formyl-N(1)-(5-phospho-D-ribosyl)glycinamide: step 1/2. Its function is as follows. Part of the phosphoribosylformylglycinamidine synthase complex involved in the purines biosynthetic pathway. Catalyzes the ATP-dependent conversion of formylglycinamide ribonucleotide (FGAR) and glutamine to yield formylglycinamidine ribonucleotide (FGAM) and glutamate. The FGAM synthase complex is composed of three subunits. PurQ produces an ammonia molecule by converting glutamine to glutamate. PurL transfers the ammonia molecule to FGAR to form FGAM in an ATP-dependent manner. PurS interacts with PurQ and PurL and is thought to assist in the transfer of the ammonia molecule from PurQ to PurL. The polypeptide is Phosphoribosylformylglycinamidine synthase subunit PurQ (Lactococcus lactis subsp. lactis (strain IL1403) (Streptococcus lactis)).